We begin with the raw amino-acid sequence, 377 residues long: Queuine tRNA-ribosyltransferase (377 aa).

The active-site Proton acceptor is the Asp89. Substrate-binding positions include 89 to 93 (DSGGF), Asp143, Gln188, and Gly215. The interval 246–252 (GVGKPED) is RNA binding. The active-site Nucleophile is the Asp265. Residues 270 to 274 (TRNAR) form an RNA binding; important for wobble base 34 recognition region. Residues Cys303, Cys305, Cys308, and His334 each coordinate Zn(2+).

The protein belongs to the queuine tRNA-ribosyltransferase family. As to quaternary structure, homodimer. Within each dimer, one monomer is responsible for RNA recognition and catalysis, while the other monomer binds to the replacement base PreQ1. Zn(2+) is required as a cofactor.

The catalysed reaction is 7-aminomethyl-7-carbaguanine + guanosine(34) in tRNA = 7-aminomethyl-7-carbaguanosine(34) in tRNA + guanine. The protein operates within tRNA modification; tRNA-queuosine biosynthesis. In terms of biological role, catalyzes the base-exchange of a guanine (G) residue with the queuine precursor 7-aminomethyl-7-deazaguanine (PreQ1) at position 34 (anticodon wobble position) in tRNAs with GU(N) anticodons (tRNA-Asp, -Asn, -His and -Tyr). Catalysis occurs through a double-displacement mechanism. The nucleophile active site attacks the C1' of nucleotide 34 to detach the guanine base from the RNA, forming a covalent enzyme-RNA intermediate. The proton acceptor active site deprotonates the incoming PreQ1, allowing a nucleophilic attack on the C1' of the ribose to form the product. After dissociation, two additional enzymatic reactions on the tRNA convert PreQ1 to queuine (Q), resulting in the hypermodified nucleoside queuosine (7-(((4,5-cis-dihydroxy-2-cyclopenten-1-yl)amino)methyl)-7-deazaguanosine). The polypeptide is Queuine tRNA-ribosyltransferase (Acinetobacter baumannii (strain ACICU)).